Reading from the N-terminus, the 638-residue chain is Chaperone protein DnaK (638 aa).

Phosphothreonine; by autocatalysis is present on Thr200. Residues 599 to 623 (LHMAATAEQQSASTGAGAGSSAKVD) are disordered. Residues 609 to 620 (SASTGAGAGSSA) are compositionally biased toward low complexity.

It belongs to the heat shock protein 70 family.

In terms of biological role, acts as a chaperone. This Xylella fastidiosa (strain M12) protein is Chaperone protein DnaK.